The primary structure comprises 426 residues: 3-phosphoshikimate 1-carboxyvinyltransferase (426 aa).

3 residues coordinate 3-phosphoshikimate: lysine 22, serine 23, and arginine 27. A phosphoenolpyruvate-binding site is contributed by lysine 22. Glycine 96 and arginine 124 together coordinate phosphoenolpyruvate. Serine 170, serine 171, glutamine 172, serine 198, aspartate 314, asparagine 337, and lysine 341 together coordinate 3-phosphoshikimate. Glutamine 172 lines the phosphoenolpyruvate pocket. Catalysis depends on aspartate 314, which acts as the Proton acceptor. Phosphoenolpyruvate is bound by residues arginine 345, arginine 387, and lysine 412.

This sequence belongs to the EPSP synthase family. In terms of assembly, monomer.

The protein resides in the cytoplasm. The catalysed reaction is 3-phosphoshikimate + phosphoenolpyruvate = 5-O-(1-carboxyvinyl)-3-phosphoshikimate + phosphate. Its pathway is metabolic intermediate biosynthesis; chorismate biosynthesis; chorismate from D-erythrose 4-phosphate and phosphoenolpyruvate: step 6/7. Catalyzes the transfer of the enolpyruvyl moiety of phosphoenolpyruvate (PEP) to the 5-hydroxyl of shikimate-3-phosphate (S3P) to produce enolpyruvyl shikimate-3-phosphate and inorganic phosphate. In Vibrio cholerae serotype O1 (strain ATCC 39541 / Classical Ogawa 395 / O395), this protein is 3-phosphoshikimate 1-carboxyvinyltransferase.